A 450-amino-acid chain; its full sequence is Protein phosphatase 1F (450 aa).

The PPM-type phosphatase domain maps to L152 to L409. D194, G195, D356, and D400 together coordinate Mn(2+). The segment at G420–S450 is disordered. The segment covering Q433–S450 has biased composition (polar residues). S450 is subject to Phosphoserine.

This sequence belongs to the PP2C family. In terms of assembly, associates with FEM1B. Mg(2+) is required as a cofactor. It depends on Mn(2+) as a cofactor.

It carries out the reaction O-phospho-L-seryl-[protein] + H2O = L-seryl-[protein] + phosphate. The enzyme catalyses O-phospho-L-threonyl-[protein] + H2O = L-threonyl-[protein] + phosphate. Its function is as follows. Dephosphorylates and concomitantly deactivates CaM-kinase II activated upon autophosphorylation, and CaM-kinases IV and I activated upon phosphorylation by CaM-kinase kinase. Promotes apoptosis. This is Protein phosphatase 1F (Ppm1f) from Rattus norvegicus (Rat).